We begin with the raw amino-acid sequence, 176 residues long: Xanthine-guanine phosphoribosyltransferase (176 aa).

Residues 51-52, Arg-88, and 111-119 each bind 5-phospho-alpha-D-ribose 1-diphosphate; these read RG and DDLVDSGKT. Position 88 (Arg-88) interacts with GMP. Residue Asp-112 coordinates Mg(2+). Positions 115 and 158 each coordinate guanine. Xanthine-binding residues include Asp-115 and Ile-158. Residues 115–119 and 157–158 contribute to the GMP site; these read DSGKT and WI.

This sequence belongs to the purine/pyrimidine phosphoribosyltransferase family. XGPT subfamily. Homotetramer. Requires Mg(2+) as cofactor.

Its subcellular location is the cell inner membrane. It catalyses the reaction GMP + diphosphate = guanine + 5-phospho-alpha-D-ribose 1-diphosphate. It carries out the reaction XMP + diphosphate = xanthine + 5-phospho-alpha-D-ribose 1-diphosphate. The enzyme catalyses IMP + diphosphate = hypoxanthine + 5-phospho-alpha-D-ribose 1-diphosphate. The protein operates within purine metabolism; GMP biosynthesis via salvage pathway; GMP from guanine: step 1/1. It participates in purine metabolism; XMP biosynthesis via salvage pathway; XMP from xanthine: step 1/1. Functionally, purine salvage pathway enzyme that catalyzes the transfer of the ribosyl-5-phosphate group from 5-phospho-alpha-D-ribose 1-diphosphate (PRPP) to the N9 position of the 6-oxopurines guanine and xanthine to form the corresponding ribonucleotides GMP (guanosine 5'-monophosphate) and XMP (xanthosine 5'-monophosphate), with the release of PPi. To a lesser extent, also acts on hypoxanthine. The protein is Xanthine-guanine phosphoribosyltransferase of Ruegeria sp. (strain TM1040) (Silicibacter sp.).